A 211-amino-acid chain; its full sequence is FMN-dependent NADH:quinone oxidoreductase 3 (211 aa).

102–105 (MWNF) is a binding site for FMN.

It belongs to the azoreductase type 1 family. In terms of assembly, homodimer. FMN is required as a cofactor.

It carries out the reaction 2 a quinone + NADH + H(+) = 2 a 1,4-benzosemiquinone + NAD(+). The enzyme catalyses N,N-dimethyl-1,4-phenylenediamine + anthranilate + 2 NAD(+) = 2-(4-dimethylaminophenyl)diazenylbenzoate + 2 NADH + 2 H(+). Quinone reductase that provides resistance to thiol-specific stress caused by electrophilic quinones. In terms of biological role, also exhibits azoreductase activity. Catalyzes the reductive cleavage of the azo bond in aromatic azo compounds to the corresponding amines. The protein is FMN-dependent NADH:quinone oxidoreductase 3 of Bacillus anthracis.